Consider the following 192-residue polypeptide: Glycerol-3-phosphate acyltransferase (192 aa).

The next 5 helical transmembrane spans lie at Met-4 to Leu-24, Leu-54 to Ser-74, Ile-80 to Phe-100, Ala-112 to Leu-132, and Leu-154 to Val-174.

It belongs to the PlsY family. As to quaternary structure, probably interacts with PlsX.

It localises to the cell inner membrane. The enzyme catalyses an acyl phosphate + sn-glycerol 3-phosphate = a 1-acyl-sn-glycero-3-phosphate + phosphate. Its pathway is lipid metabolism; phospholipid metabolism. Its function is as follows. Catalyzes the transfer of an acyl group from acyl-phosphate (acyl-PO(4)) to glycerol-3-phosphate (G3P) to form lysophosphatidic acid (LPA). This enzyme utilizes acyl-phosphate as fatty acyl donor, but not acyl-CoA or acyl-ACP. In Pseudomonas syringae pv. syringae (strain B728a), this protein is Glycerol-3-phosphate acyltransferase.